The sequence spans 371 residues: Cell division cycle-associated protein 7 (371 aa).

Disordered regions lie at residues 60-110 and 140-188; these read TRSQ…EDES and PGSF…SRIL. Residues 94–103 show a composition bias toward polar residues; it reads PSENSVTDSN. Phosphoserine is present on Ser-142. The tract at residues 146–170 is interaction with MYC; that stretch reads RHPLPGSDSQSRRPRRRTFPGVASR. Residues 160–176 carry the Nuclear localization signal motif; that stretch reads RRRTFPGVASRRNPERR. Position 163 is a phosphothreonine (Thr-163). Phosphoserine is present on Ser-190. Lys-204 participates in a covalent cross-link: Glycyl lysine isopeptide (Lys-Gly) (interchain with G-Cter in SUMO2). Residues 247–371 form a mediates transcriptional activity region; that stretch reads EEELENVCSN…SLKQEFEMQA (125 aa).

As to quaternary structure, interacts with MYC (via C-terminus), YWHAE and YWHAZ. Phosphorylation at Thr-163 promotes interaction with YWHAE and YWHAZ, dissociation from MYC and sequestration in the cytoplasm. In vitro, phosphorylated at Thr-163 by AKT. In terms of tissue distribution, ubiquitous with higher level in thymus and small intestine. Overexpressed in a large number of tumors, in blood from patients with acute myelogenous leukemia (AML) and in chronic myelogenous leukemia (CML) blast crisis.

It localises to the nucleus. Its subcellular location is the cytoplasm. In terms of biological role, participates in MYC-mediated cell transformation and apoptosis; induces anchorage-independent growth and clonogenicity in lymphoblastoid cells. Insufficient to induce tumorigenicity when overexpressed but contributes to MYC-mediated tumorigenesis. May play a role as transcriptional regulator. The polypeptide is Cell division cycle-associated protein 7 (CDCA7) (Homo sapiens (Human)).